The following is a 359-amino-acid chain: uncharacterized protein (359 aa).

Positions 1-17 are cleaved as a signal peptide; it reads MLGRSLTSVLIVPTGIG. The N-palmitoyl cysteine moiety is linked to residue cysteine 18. Residue cysteine 18 is the site of S-diacylglycerol cysteine attachment.

The protein localises to the cell membrane. This is an uncharacterized protein from Synechococcus sp. (strain ATCC 27144 / PCC 6301 / SAUG 1402/1) (Anacystis nidulans).